The primary structure comprises 493 residues: Guanosine-5'-triphosphate,3'-diphosphate pyrophosphatase (493 aa).

The protein belongs to the GppA/Ppx family. GppA subfamily.

The catalysed reaction is guanosine 3'-diphosphate 5'-triphosphate + H2O = guanosine 3',5'-bis(diphosphate) + phosphate + H(+). Its pathway is purine metabolism; ppGpp biosynthesis; ppGpp from GTP: step 2/2. In terms of biological role, catalyzes the conversion of pppGpp to ppGpp. Guanosine pentaphosphate (pppGpp) is a cytoplasmic signaling molecule which together with ppGpp controls the 'stringent response', an adaptive process that allows bacteria to respond to amino acid starvation, resulting in the coordinated regulation of numerous cellular activities. The sequence is that of Guanosine-5'-triphosphate,3'-diphosphate pyrophosphatase from Salmonella agona (strain SL483).